Reading from the N-terminus, the 342-residue chain is UDP-N-acetylglucosamine--N-acetylmuramyl-(pentapeptide) pyrophosphoryl-undecaprenol N-acetylglucosamine transferase (342 aa).

UDP-N-acetyl-alpha-D-glucosamine is bound by residues 10 to 12 (TGG), Asn-124, Ser-177, and Gln-275.

This sequence belongs to the glycosyltransferase 28 family. MurG subfamily.

The protein localises to the cell inner membrane. The enzyme catalyses di-trans,octa-cis-undecaprenyl diphospho-N-acetyl-alpha-D-muramoyl-L-alanyl-D-glutamyl-meso-2,6-diaminopimeloyl-D-alanyl-D-alanine + UDP-N-acetyl-alpha-D-glucosamine = di-trans,octa-cis-undecaprenyl diphospho-[N-acetyl-alpha-D-glucosaminyl-(1-&gt;4)]-N-acetyl-alpha-D-muramoyl-L-alanyl-D-glutamyl-meso-2,6-diaminopimeloyl-D-alanyl-D-alanine + UDP + H(+). The protein operates within cell wall biogenesis; peptidoglycan biosynthesis. Cell wall formation. Catalyzes the transfer of a GlcNAc subunit on undecaprenyl-pyrophosphoryl-MurNAc-pentapeptide (lipid intermediate I) to form undecaprenyl-pyrophosphoryl-MurNAc-(pentapeptide)GlcNAc (lipid intermediate II). The protein is UDP-N-acetylglucosamine--N-acetylmuramyl-(pentapeptide) pyrophosphoryl-undecaprenol N-acetylglucosamine transferase of Campylobacter jejuni subsp. jejuni serotype O:2 (strain ATCC 700819 / NCTC 11168).